The sequence spans 184 residues: Succinate dehydrogenase cytochrome b560 subunit, mitochondrial (184 aa).

Residues 65-94 (LTWMLSGFHRISGCVMAGTLLVGGLGFAVL) form a helical membrane-spanning segment. Residues 95–114 (PLDFTTFVEYIRGWNLPCAV) are Mitochondrial intermembrane-facing. The helical transmembrane segment at 115–139 (TAVFKYIIAFPIIFHTLNGIRFLGF) threads the bilayer. H129 contributes to the heme binding site. Over 140 to 147 (DLAKGVDN) the chain is Mitochondrial matrix. A helical membrane pass occupies residues 148–169 (IGQVYKSGWLVFGVSAVIALAI). Residues 170 to 172 (VIN) are Mitochondrial intermembrane-facing.

This sequence belongs to the cytochrome b560 family. In terms of assembly, component of complex II composed of four subunits: a flavoprotein (FP), iron-sulfur protein (IP), and a cytochrome b560 composed of two transmembrane proteins. The cofactor is heme.

The protein localises to the mitochondrion inner membrane. Its pathway is carbohydrate metabolism; tricarboxylic acid cycle. Functionally, membrane-anchoring subunit of succinate dehydrogenase (SDH) that is involved in complex II of the mitochondrial electron transport chain and is responsible for transferring electrons from succinate to ubiquinone (coenzyme Q). Mediates resistance to enteropathogenic E.coli infection. The protein is Succinate dehydrogenase cytochrome b560 subunit, mitochondrial (mev-1) of Caenorhabditis briggsae.